We begin with the raw amino-acid sequence, 349 residues long: tRNA pseudouridine synthase D (349 aa).

Residue F27 participates in substrate binding. D80 serves as the catalytic Nucleophile. Residue N129 coordinates substrate. The region spanning 155 to 303 (GVPNYFGAQR…VEAARRAMLL (149 aa)) is the TRUD domain. Residue F329 participates in substrate binding.

The protein belongs to the pseudouridine synthase TruD family.

It carries out the reaction uridine(13) in tRNA = pseudouridine(13) in tRNA. Its function is as follows. Responsible for synthesis of pseudouridine from uracil-13 in transfer RNAs. The sequence is that of tRNA pseudouridine synthase D from Escherichia coli (strain K12 / MC4100 / BW2952).